A 132-amino-acid chain; its full sequence is UPF0299 membrane protein YohJ (132 aa).

The next 4 helical transmembrane spans lie at 7-27 (IIWQ…AGIF), 31-51 (LLPV…VLLA), 63-83 (GCYV…VGVM), and 93-113 (FGPV…VVSW).

The protein belongs to the UPF0299 family.

The protein resides in the cell inner membrane. The polypeptide is UPF0299 membrane protein YohJ (Shigella boydii serotype 18 (strain CDC 3083-94 / BS512)).